The primary structure comprises 488 residues: GTPase Der (488 aa).

2 EngA-type G domains span residues 3–166 (PVVA…AEAM) and 199–372 (IKLA…DSAT). GTP-binding positions include 9–16 (GRPNVGKS), 56–60 (DTGGI), 118–121 (NKVD), 205–212 (GKPNVGKS), 252–256 (DTAGV), and 317–320 (NKWD). The 85-residue stretch at 373–457 (RRVSTSMLTR…PIQLRFQEGD (85 aa)) folds into the KH-like domain. The segment at 469–488 (MSQERRRKRALSHIKDRKTK) is disordered. Basic residues predominate over residues 473–488 (RRRKRALSHIKDRKTK).

It belongs to the TRAFAC class TrmE-Era-EngA-EngB-Septin-like GTPase superfamily. EngA (Der) GTPase family. As to quaternary structure, associates with the 50S ribosomal subunit.

Functionally, GTPase that plays an essential role in the late steps of ribosome biogenesis. The sequence is that of GTPase Der from Shewanella sp. (strain W3-18-1).